The following is a 426-amino-acid chain: Adenylosuccinate synthetase (426 aa).

Residues 12–18 (GDEGKGK) and 40–42 (GHT) each bind GTP. Asp-13 acts as the Proton acceptor in catalysis. Mg(2+)-binding residues include Asp-13 and Gly-40. IMP contacts are provided by residues 13-16 (DEGK), 38-41 (NAGH), Thr-131, Arg-145, Gln-226, Thr-241, and Arg-305. The active-site Proton donor is His-41. 301–307 (ATTGRKR) provides a ligand contact to substrate. GTP is bound by residues Arg-307, 333–335 (KLD), and 415–417 (SVG).

It belongs to the adenylosuccinate synthetase family. In terms of assembly, homodimer. Mg(2+) serves as cofactor.

It is found in the cytoplasm. The catalysed reaction is IMP + L-aspartate + GTP = N(6)-(1,2-dicarboxyethyl)-AMP + GDP + phosphate + 2 H(+). Its pathway is purine metabolism; AMP biosynthesis via de novo pathway; AMP from IMP: step 1/2. Its function is as follows. Plays an important role in the de novo pathway of purine nucleotide biosynthesis. Catalyzes the first committed step in the biosynthesis of AMP from IMP. This chain is Adenylosuccinate synthetase, found in Nitratidesulfovibrio vulgaris (strain DP4) (Desulfovibrio vulgaris).